The primary structure comprises 270 residues: UPF0354 protein BCAH820_4810 (270 aa).

This sequence belongs to the UPF0354 family.

This Bacillus cereus (strain AH820) protein is UPF0354 protein BCAH820_4810.